The chain runs to 295 residues: Putative enoyl reductase C646.07c (295 aa).

Topologically, residues 1–84 (MSITLSSRGR…KDLGPQIGWR (84 aa)) are cytoplasmic. A helical transmembrane segment spans residues 85–105 (TVFMIEYLGPLVIHLFFILNY). The Lumenal segment spans residues 106–157 (KWIYRKDYNLCLNQKIAFVLVMLHFMKREYESIFVHRFSLATMPLRNIFKNC). Residues 158 to 178 (AHYHLLSGLFLAYFIYGPWHA) form a helical membrane-spanning segment. The Cytoplasmic portion of the chain corresponds to 179 to 186 (NDYIKPNH). The helical transmembrane segment at 187 to 207 (LLFLIVGWAFAVLSNFRTHII) threads the bilayer. At 208 to 223 (LRDLRPAGSKKRVIPT) the chain is on the lumenal side. The chain crosses the membrane as a helical span at residues 224-246 (GYGFNLVSFPNYFFESLGWLFFA). Residues 247–250 (LLTK) are Cytoplasmic-facing. A helical transmembrane segment spans residues 251 to 268 (SWASWIFLFVGSAQMFVW). The Lumenal segment spans residues 269–295 (AKKKHARYLKEFPNYPRSRKIMIPFFL).

Belongs to the steroid 5-alpha reductase family.

It localises to the endoplasmic reticulum membrane. The catalysed reaction is a (2E)-enoyl-CoA + NADPH + H(+) = a 2,3-saturated acyl-CoA + NADP(+). In Schizosaccharomyces pombe (strain 972 / ATCC 24843) (Fission yeast), this protein is Putative enoyl reductase C646.07c.